The sequence spans 570 residues: Sulfite reductase [NADPH] hemoprotein beta-component (570 aa).

Residues cysteine 433, cysteine 439, cysteine 478, and cysteine 482 each contribute to the [4Fe-4S] cluster site. Cysteine 482 contacts siroheme.

It belongs to the nitrite and sulfite reductase 4Fe-4S domain family. In terms of assembly, alpha(8)-beta(8). The alpha component is a flavoprotein, the beta component is a hemoprotein. Siroheme serves as cofactor. Requires [4Fe-4S] cluster as cofactor.

It carries out the reaction hydrogen sulfide + 3 NADP(+) + 3 H2O = sulfite + 3 NADPH + 4 H(+). It functions in the pathway sulfur metabolism; hydrogen sulfide biosynthesis; hydrogen sulfide from sulfite (NADPH route): step 1/1. Component of the sulfite reductase complex that catalyzes the 6-electron reduction of sulfite to sulfide. This is one of several activities required for the biosynthesis of L-cysteine from sulfate. The sequence is that of Sulfite reductase [NADPH] hemoprotein beta-component from Aeromonas hydrophila subsp. hydrophila (strain ATCC 7966 / DSM 30187 / BCRC 13018 / CCUG 14551 / JCM 1027 / KCTC 2358 / NCIMB 9240 / NCTC 8049).